The following is a 161-amino-acid chain: Nucleotide-binding protein ABO_0048 (161 aa).

It belongs to the YajQ family.

Nucleotide-binding protein. The polypeptide is Nucleotide-binding protein ABO_0048 (Alcanivorax borkumensis (strain ATCC 700651 / DSM 11573 / NCIMB 13689 / SK2)).